Consider the following 479-residue polypeptide: Sulfate adenylyltransferase subunit 1 (479 aa).

Residues 25-239 (KSLLRFLTCG…EVLETVDIQR (215 aa)) enclose the tr-type G domain. Residues 34 to 41 (GSVDDGKS) form a G1 region. 34-41 (GSVDDGKS) contributes to the GTP binding site. A G2 region spans residues 92–96 (GITID). The segment at 113-116 (DTPG) is G3. GTP contacts are provided by residues 113-117 (DTPGH) and 168-171 (NKMD). Positions 168–171 (NKMD) are G4. Positions 206 to 208 (SAL) are G5.

The protein belongs to the TRAFAC class translation factor GTPase superfamily. Classic translation factor GTPase family. CysN/NodQ subfamily. As to quaternary structure, heterodimer composed of CysD, the smaller subunit, and CysN.

It catalyses the reaction sulfate + ATP + H(+) = adenosine 5'-phosphosulfate + diphosphate. It functions in the pathway sulfur metabolism; hydrogen sulfide biosynthesis; sulfite from sulfate: step 1/3. With CysD forms the ATP sulfurylase (ATPS) that catalyzes the adenylation of sulfate producing adenosine 5'-phosphosulfate (APS) and diphosphate, the first enzymatic step in sulfur assimilation pathway. APS synthesis involves the formation of a high-energy phosphoric-sulfuric acid anhydride bond driven by GTP hydrolysis by CysN coupled to ATP hydrolysis by CysD. This is Sulfate adenylyltransferase subunit 1 from Salmonella paratyphi B (strain ATCC BAA-1250 / SPB7).